Here is a 253-residue protein sequence, read N- to C-terminus: Indole-3-glycerol phosphate synthase (253 aa).

Belongs to the TrpC family.

It carries out the reaction 1-(2-carboxyphenylamino)-1-deoxy-D-ribulose 5-phosphate + H(+) = (1S,2R)-1-C-(indol-3-yl)glycerol 3-phosphate + CO2 + H2O. Its pathway is amino-acid biosynthesis; L-tryptophan biosynthesis; L-tryptophan from chorismate: step 4/5. The protein is Indole-3-glycerol phosphate synthase of Bacillus anthracis (strain A0248).